We begin with the raw amino-acid sequence, 93 residues long: Small ribosomal subunit protein uS19 (93 aa).

This sequence belongs to the universal ribosomal protein uS19 family.

Protein S19 forms a complex with S13 that binds strongly to the 16S ribosomal RNA. The chain is Small ribosomal subunit protein uS19 from Agathobacter rectalis (strain ATCC 33656 / DSM 3377 / JCM 17463 / KCTC 5835 / VPI 0990) (Eubacterium rectale).